The chain runs to 670 residues: Leucine zipper putative tumor suppressor 2 (670 aa).

3 disordered regions span residues 1 to 52 (MAIV…GVPG), 92 to 131 (NEDF…IPVS), and 150 to 323 (PVLP…PSDE). The required for centrosomal localization stretch occupies residues 1 to 333 (MAIVQTLPVP…ALLHCVLEGK (333 aa)). Residues 187-199 (ASSSSSSSSSSAA) are compositionally biased toward low complexity. A compositionally biased stretch (polar residues) spans 213–233 (PSGTLSDSGRNSLSSLPTYST). Low complexity-rich tracts occupy residues 242–251 (SPGGHLPSHG) and 260–310 (PARG…GGDR). 2 positions are modified to phosphoserine: Ser-249 and Ser-296. Residues 311–321 (SPPPPPPPPPS) are compositionally biased toward pro residues. Positions 329–650 (VLEGKLRDRE…LELEARELAD (322 aa)) form a coiled coil. Residues 448–670 (SGEISLLKQQ…CLEEITATEI (223 aa)) form a sufficient for interaction with CTNNB1 region. The segment at 451 to 670 (ISLLKQQLKE…CLEEITATEI (220 aa)) is sufficient for interaction with KATNB1 and for inhibition of katanin-mediated microtubule severing. Residue Ser-571 is modified to Phosphoserine. The Nuclear export signal motif lies at 632–641 (LEQELQQLSL).

It belongs to the LZTS2 family. As to quaternary structure, interacts with CTNNB1. Interacts with KATNB1. Also interacts with gamma-tubulin and KIF23.

Its subcellular location is the cytoplasm. The protein localises to the cytoskeleton. It is found in the microtubule organizing center. It localises to the centrosome. Functionally, negative regulator of katanin-mediated microtubule severing and release from the centrosome. Required for central spindle formation and the completion of cytokinesis. May negatively regulate axonal outgrowth by preventing the formation of microtubule bundles that are necessary for transport within the elongating axon. Negative regulator of the Wnt signaling pathway. Represses beta-catenin-mediated transcriptional activation by promoting the nuclear exclusion of beta-catenin. The protein is Leucine zipper putative tumor suppressor 2 (Lzts2) of Rattus norvegicus (Rat).